The following is a 229-amino-acid chain: Methyltransferase ctvB (229 aa).

The protein belongs to the methyltransferase superfamily.

The protein operates within mycotoxin biosynthesis. Its function is as follows. Methyltransferase; part of the gene cluster that mediates the biosynthesis of citreoviridin, an inhibitor of the of F1-ATPase beta-subunit. The HR-PKS ctvA accepts acetyl-CoA as the starter unit and catalyzes eight iterations of malonyl-CoA extension and four iterations of SAM-dependent methylation at C4, C12, C14, and C16. The KR and DH domains selectively act on the first six iterations to generate the hexaene chain. In the last three iterations, the KR and DH domains terminate their functions to yield a beta,delta-diketo ester moiety, which then undergoes intramolecular cyclization to yield an alpha-pyrone intermediate. Subsequently, ctvB methylates the alpha-pyrone hydroxyl group to generate citreomontanin. In order to form the tetrahydrofuran ring with the correct stereochemistry, the terminal alkenes of citreomontanin need to undergo isomerization to yield a (17Z)-hexaene, a step that could be catalyzed by ctvC. The (17Z)-hexaene then undergoes bisepoxidation by ctvC to form a (17R,16R,15S,14R)-bisepoxide moiety. Lastly, ctvD acts as a regioselective hydrolase to form the tetrahydrofuran ring with the substituents in the correct absolute configuration, completing the biosynthesis of citreoviridin. This chain is Methyltransferase ctvB, found in Aspergillus terreus (strain NIH 2624 / FGSC A1156).